Reading from the N-terminus, the 425-residue chain is Septin-11 (425 aa).

A2 carries the N-acetylalanine modification. At S9 the chain carries Phosphoserine. Residues 38-304 enclose the Septin-type G domain; it reads QGFCFNILCV…ELYRRCKLEE (267 aa). The tract at residues 48–55 is G1 motif; the sequence is GETGIGKS. Residues 48 to 55, G103, 184 to 192, G238, and R253 contribute to the GTP site; these read GETGIGKS and KADTIAKNE. A G3 motif region spans residues 100–103; it reads DTVG. The G4 motif stretch occupies residues 183–186; the sequence is AKAD. Residues 320–410 adopt a coiled-coil conformation; it reads QETYEAKRNE…AAQLLQSQAQ (91 aa). Residues 399-425 are disordered; sequence KAAAQLLQSQAQQSGAQQTKKDKDKKN. Over residues 401 to 416 the composition is skewed to low complexity; the sequence is AAQLLQSQAQQSGAQQ.

The protein belongs to the TRAFAC class TrmE-Era-EngA-EngB-Septin-like GTPase superfamily. Septin GTPase family. In terms of assembly, septins polymerize into heterooligomeric protein complexes that form filaments, and can associate with cellular membranes, actin filaments and microtubules. Forms homooligomers. GTPase activity is required for filament formation. Interacts with SEPTIN7, SEPTIN9 and SEPTIN12.

Its subcellular location is the cytoplasm. It is found in the cytoskeleton. The protein resides in the synapse. It localises to the cell projection. The protein localises to the dendritic spine. Its subcellular location is the axon. Filament-forming cytoskeletal GTPase. May play a role in cytokinesis (Potential). May play a role in the cytoarchitecture of neurons, including dendritic arborization and dendritic spines, and in GABAergic synaptic connectivity. This Bos taurus (Bovine) protein is Septin-11.